The chain runs to 1132 residues: NUT family member 1 (1132 aa).

7 disordered regions span residues 1-56, 337-365, 383-405, 476-584, 693-714, 873-892, and 922-1017; these read MASD…SVFS, AASK…EIPP, LATG…EGMY, EEED…VERR, RGTP…GERD, DASS…NSFS, and PLNV…DEEL. Positions 21–36 are enriched in pro residues; that stretch reads APSPSPALPFLPPTSD. The span at 337–352 shows a compositional bias: basic residues; that stretch reads AASKTRAPRRRQRKAQ. Residues 395–404 show a composition bias toward acidic residues; the sequence is EGQQQEEEGM. Polar residues-rich tracts occupy residues 487–497, 697–706, and 883–892; these read SGAQLDSSPSG, MAQSYDQNPS, and EAGSRGNSFS. Basic and acidic residues predominate over residues 932–942; that stretch reads GEGRVDPDLSK. The span at 950-971 shows a compositional bias: polar residues; it reads QESQESYTTGTPKATSSHQGLG. 3 positions are modified to phosphoserine: serine 1026, serine 1029, and serine 1031. Residues 1031 to 1132 form a disordered region; that stretch reads SPREHPLSPH…GRRKKRRRSQ (102 aa). Glutamine 1046 is subject to N5-methylglutamine. Positions 1123–1132 are enriched in basic residues; sequence GRRKKRRRSQ.

Belongs to the NUT family. Post-translationally, methylated at Gln-1046 by N6AMT1. In terms of processing, phosphorylation on Ser-1026, Ser-1029 or Ser-1031 is important for cytoplasmic export. In terms of tissue distribution, specifically expressed in testis.

Its subcellular location is the cytoplasm. It localises to the nucleus. Plays a role in the regulation of proliferation. Regulates TERT expression by modulating SP1 binding to TERT promoter binding sites. The protein is NUT family member 1 of Homo sapiens (Human).